We begin with the raw amino-acid sequence, 682 residues long: MASVALLRSFRRREVQMASVSAFKSVSANGKNSMFGKLGYLARPFCSRPVGNDVIGIDLGTTNSCVSVMEGKTARVIENAEGSRTTPSVVAMNQKGELLVGTPAKRQAVTNPTNTIFGSKRLIGRRFDDPQTQKEMKMVPYKIVKAPNGDAWVEANGQKFSPSQIGANVLTKMKETAEAYLGKSINKAVVTVPAYFNDAQRQATKDAGKIAGLDVQRIINEPTAAALSYGMNNKEGVIAVFDLGGGTFDVSILEISSGVFEVKATNGDTFLGGEDFDNTLLEYLVNEFKRSDNIDLTKDNLALQRLREAAEKAKIELSSTTQTEINLPFITADASGAKHLNITLTRSKFEGLVGKLIERTRSPCQNCLKDAGVTIKEVDEVLLVGGMTRVPKVQEIVSEIFGKSPCKGVNPDEAVAMGAAIQGGILRGDVKDLLLLDVVPLSLGIETLGAVFTKLIPRNTTIPTKKSQVFSTAADNQMQVGIKVLQGEREMAADNKVLGEFDLVGIPPAPRGMPQIEVTFDIDANGITTVSAKDKATGKEQNITIRSSGGLSDDEINRMVKEAELNAQKDQEKKQLIDLRNSADTTIYSVEKSLSEYREKIPAEIASEIETAVSDLRTAMAGEDVEDIKAKVEAANKAVSKIGEHMSKGSGSSGSDGSSGEGTSGTEQTPEAEFEEASGSRK.

A mitochondrion-targeting transit peptide spans 1-46; it reads MASVALLRSFRRREVQMASVSAFKSVSANGKNSMFGKLGYLARPFC. The disordered stretch occupies residues 640-682; it reads SKIGEHMSKGSGSSGSDGSSGEGTSGTEQTPEAEFEEASGSRK. The segment covering 651-663 has biased composition (gly residues); the sequence is GSSGSDGSSGEGT.

The protein belongs to the heat shock protein 70 (TC 1.A.33) family. DnaK subfamily. As to quaternary structure, interacts with HSCB.

It is found in the mitochondrion. The protein localises to the cytoplasm. Its subcellular location is the cytosol. In terms of biological role, chaperone involved in the maturation of iron-sulfur [Fe-S] cluster-containing proteins. Has a low intrinsic ATPase activity which is markedly stimulated by HSCB and ISU1. In cooperation with other chaperones, Hsp70s are key components that facilitate folding of de novo synthesized proteins, assist translocation of precursor proteins into organelles, and are responsible for degradation of damaged protein under stress conditions. In Arabidopsis thaliana (Mouse-ear cress), this protein is Heat shock 70 kDa protein 9, mitochondrial.